A 472-amino-acid polypeptide reads, in one-letter code: 3-isopropylmalate dehydratase large subunit (472 aa).

[4Fe-4S] cluster is bound by residues Cys347, Cys407, and Cys410.

This sequence belongs to the aconitase/IPM isomerase family. LeuC type 1 subfamily. In terms of assembly, heterodimer of LeuC and LeuD. [4Fe-4S] cluster is required as a cofactor.

The catalysed reaction is (2R,3S)-3-isopropylmalate = (2S)-2-isopropylmalate. It participates in amino-acid biosynthesis; L-leucine biosynthesis; L-leucine from 3-methyl-2-oxobutanoate: step 2/4. Functionally, catalyzes the isomerization between 2-isopropylmalate and 3-isopropylmalate, via the formation of 2-isopropylmaleate. This chain is 3-isopropylmalate dehydratase large subunit, found in Opitutus terrae (strain DSM 11246 / JCM 15787 / PB90-1).